Here is a 599-residue protein sequence, read N- to C-terminus: UvrABC system protein C (599 aa).

The region spanning 15-93 (EKPGCYQYFD…IKEYQPRYNV (79 aa)) is the GIY-YIG domain. One can recognise a UVR domain in the interval 207-242 (HRLVRMYRDRMQVYSEGLRFEEAQICKERIELLERY).

It belongs to the UvrC family. Interacts with UvrB in an incision complex.

It is found in the cytoplasm. Functionally, the UvrABC repair system catalyzes the recognition and processing of DNA lesions. UvrC both incises the 5' and 3' sides of the lesion. The N-terminal half is responsible for the 3' incision and the C-terminal half is responsible for the 5' incision. This chain is UvrABC system protein C, found in Porphyromonas gingivalis (strain ATCC BAA-308 / W83).